A 617-amino-acid chain; its full sequence is Dihydroxy-acid dehydratase (617 aa).

D81 lines the Mg(2+) pocket. Residue C122 participates in [2Fe-2S] cluster binding. The Mg(2+) site is built by D123 and K124. K124 carries the post-translational modification N6-carboxylysine. Residue C195 participates in [2Fe-2S] cluster binding. E491 is a binding site for Mg(2+). The active-site Proton acceptor is the S517.

Belongs to the IlvD/Edd family. In terms of assembly, homodimer. Requires [2Fe-2S] cluster as cofactor. The cofactor is Mg(2+).

It catalyses the reaction (2R)-2,3-dihydroxy-3-methylbutanoate = 3-methyl-2-oxobutanoate + H2O. The catalysed reaction is (2R,3R)-2,3-dihydroxy-3-methylpentanoate = (S)-3-methyl-2-oxopentanoate + H2O. Its pathway is amino-acid biosynthesis; L-isoleucine biosynthesis; L-isoleucine from 2-oxobutanoate: step 3/4. It participates in amino-acid biosynthesis; L-valine biosynthesis; L-valine from pyruvate: step 3/4. In terms of biological role, functions in the biosynthesis of branched-chain amino acids. Catalyzes the dehydration of (2R,3R)-2,3-dihydroxy-3-methylpentanoate (2,3-dihydroxy-3-methylvalerate) into 2-oxo-3-methylpentanoate (2-oxo-3-methylvalerate) and of (2R)-2,3-dihydroxy-3-methylbutanoate (2,3-dihydroxyisovalerate) into 2-oxo-3-methylbutanoate (2-oxoisovalerate), the penultimate precursor to L-isoleucine and L-valine, respectively. This chain is Dihydroxy-acid dehydratase, found in Buchnera aphidicola subsp. Acyrthosiphon pisum (strain 5A).